We begin with the raw amino-acid sequence, 258 residues long: 3-deoxy-manno-octulosonate cytidylyltransferase (258 aa).

The protein belongs to the KdsB family.

It localises to the cytoplasm. The enzyme catalyses 3-deoxy-alpha-D-manno-oct-2-ulosonate + CTP = CMP-3-deoxy-beta-D-manno-octulosonate + diphosphate. Its pathway is nucleotide-sugar biosynthesis; CMP-3-deoxy-D-manno-octulosonate biosynthesis; CMP-3-deoxy-D-manno-octulosonate from 3-deoxy-D-manno-octulosonate and CTP: step 1/1. It participates in bacterial outer membrane biogenesis; lipopolysaccharide biosynthesis. Activates KDO (a required 8-carbon sugar) for incorporation into bacterial lipopolysaccharide in Gram-negative bacteria. The sequence is that of 3-deoxy-manno-octulosonate cytidylyltransferase from Gemmatimonas aurantiaca (strain DSM 14586 / JCM 11422 / NBRC 100505 / T-27).